Consider the following 326-residue polypeptide: DNA-directed RNA polymerase subunit alpha (326 aa).

Positions 1–232 (MQSATEFLKP…SQLSVFADLE (232 aa)) are alpha N-terminal domain (alpha-NTD). Residues 246-326 (VDPLLLRPVD…NWPPAGLERP (81 aa)) are alpha C-terminal domain (alpha-CTD).

It belongs to the RNA polymerase alpha chain family. In terms of assembly, homodimer. The RNAP catalytic core consists of 2 alpha, 1 beta, 1 beta' and 1 omega subunit. When a sigma factor is associated with the core the holoenzyme is formed, which can initiate transcription.

The catalysed reaction is RNA(n) + a ribonucleoside 5'-triphosphate = RNA(n+1) + diphosphate. In terms of biological role, DNA-dependent RNA polymerase catalyzes the transcription of DNA into RNA using the four ribonucleoside triphosphates as substrates. The sequence is that of DNA-directed RNA polymerase subunit alpha from Thiobacillus denitrificans (strain ATCC 25259 / T1).